The primary structure comprises 253 residues: Chemotaxis protein PomA (253 aa).

Transmembrane regions (helical) follow at residues 6-26 (LLGL…GGSI), 28-48 (MFVD…VVLM), 146-166 (FGDV…VAML), and 180-200 (AVAL…FFPI). The Cytoplasmic portion of the chain corresponds to 201–253 (ADKLSLRRDQETLNRRLIMDGVLAIQDGQNPRVIDSYLKNYLNEGKRALEIDE).

The protein belongs to the MotA family. Each stator complex is composed of 4 PomA and 2 PomB subunits. 2 A subunits and 1 B subunit are thought to form a single ion channel, so that each stator complex contains two channels.

It localises to the cell inner membrane. PomA and PomB comprise the stator element of the flagellar motor complex. Required for rotation of the flagellar motor. Probable transmembrane proton channel. In Vibrio alginolyticus, this protein is Chemotaxis protein PomA (pomA).